The following is an 886-amino-acid chain: Leucine--tRNA ligase (886 aa).

The 'HIGH' region motif lies at 51 to 61; the sequence is PYPSGRIHMGH. The 'KMSKS' region motif lies at 644–648; the sequence is KMSKS. Position 647 (K647) interacts with ATP.

The protein belongs to the class-I aminoacyl-tRNA synthetase family.

It is found in the cytoplasm. The enzyme catalyses tRNA(Leu) + L-leucine + ATP = L-leucyl-tRNA(Leu) + AMP + diphosphate. The sequence is that of Leucine--tRNA ligase from Bartonella tribocorum (strain CIP 105476 / IBS 506).